The chain runs to 1411 residues: DNA-directed RNA polymerase subunit beta' (1411 aa).

The Zn(2+) site is built by cysteine 70, cysteine 72, cysteine 85, and cysteine 88. Mg(2+) contacts are provided by aspartate 460, aspartate 462, and aspartate 464. Residues cysteine 814, cysteine 888, cysteine 895, and cysteine 898 each contribute to the Zn(2+) site.

Belongs to the RNA polymerase beta' chain family. The RNAP catalytic core consists of 2 alpha, 1 beta, 1 beta' and 1 omega subunit. When a sigma factor is associated with the core the holoenzyme is formed, which can initiate transcription. It depends on Mg(2+) as a cofactor. Zn(2+) serves as cofactor.

The enzyme catalyses RNA(n) + a ribonucleoside 5'-triphosphate = RNA(n+1) + diphosphate. Functionally, DNA-dependent RNA polymerase catalyzes the transcription of DNA into RNA using the four ribonucleoside triphosphates as substrates. The polypeptide is DNA-directed RNA polymerase subunit beta' (Idiomarina loihiensis (strain ATCC BAA-735 / DSM 15497 / L2-TR)).